A 257-amino-acid chain; its full sequence is Alcohol dehydrogenase 1 (257 aa).

Residue valine 9–leucine 33 participates in NAD(+) binding. Position 137 (serine 137) interacts with substrate. The active-site Proton acceptor is the tyrosine 150.

The protein belongs to the short-chain dehydrogenases/reductases (SDR) family. In terms of assembly, homodimer.

It catalyses the reaction a primary alcohol + NAD(+) = an aldehyde + NADH + H(+). The enzyme catalyses a secondary alcohol + NAD(+) = a ketone + NADH + H(+). The polypeptide is Alcohol dehydrogenase 1 (ADH1) (Ceratitis capitata (Mediterranean fruit fly)).